A 161-amino-acid chain; its full sequence is Protein ZMO0507 (161 aa).

It belongs to the free Met sulfoxide reductase family.

The polypeptide is Protein ZMO0507 (Zymomonas mobilis subsp. mobilis (strain ATCC 31821 / ZM4 / CP4)).